A 183-amino-acid polypeptide reads, in one-letter code: Large ribosomal subunit protein uL10 (183 aa).

Belongs to the universal ribosomal protein uL10 family. In terms of assembly, part of the ribosomal stalk of the 50S ribosomal subunit. The N-terminus interacts with L11 and the large rRNA to form the base of the stalk. The C-terminus forms an elongated spine to which L12 dimers bind in a sequential fashion forming a multimeric L10(L12)X complex.

Forms part of the ribosomal stalk, playing a central role in the interaction of the ribosome with GTP-bound translation factors. The protein is Large ribosomal subunit protein uL10 of Mesomycoplasma hyopneumoniae (strain 232) (Mycoplasma hyopneumoniae).